Here is a 294-residue protein sequence, read N- to C-terminus: 4-diphosphocytidyl-2-C-methyl-D-erythritol kinase (294 aa).

K11 is a catalytic residue. P96–A106 contributes to the ATP binding site. Residue D138 is part of the active site.

This sequence belongs to the GHMP kinase family. IspE subfamily.

The enzyme catalyses 4-CDP-2-C-methyl-D-erythritol + ATP = 4-CDP-2-C-methyl-D-erythritol 2-phosphate + ADP + H(+). It functions in the pathway isoprenoid biosynthesis; isopentenyl diphosphate biosynthesis via DXP pathway; isopentenyl diphosphate from 1-deoxy-D-xylulose 5-phosphate: step 3/6. Catalyzes the phosphorylation of the position 2 hydroxy group of 4-diphosphocytidyl-2C-methyl-D-erythritol. The polypeptide is 4-diphosphocytidyl-2-C-methyl-D-erythritol kinase (Rhodopseudomonas palustris (strain BisB5)).